A 1070-amino-acid chain; its full sequence is uncharacterized protein (1070 aa).

Disordered stretches follow at residues 66-88, 355-388, 423-483, 667-692, and 735-786; these read EKEK…PGLE, DLDF…DFSN, EDDL…EQID, EELK…EETE, and SKTQ…NNNN. The segment covering 73-83 has biased composition (low complexity); it reads NENTSNVNKIK. Basic and acidic residues-rich tracts occupy residues 435–460 and 474–483; these read KKEE…EEYR and MKMHEKEQID. A coiled-coil region spans residues 475–736; it reads KMHEKEQIDD…EMRLQLIRSK (262 aa). Residues 735-745 show a composition bias toward polar residues; the sequence is SKTQGTSSTFI. A compositionally biased stretch (basic and acidic residues) spans 751–765; it reads KHLESLKEEKKKEVK. Residues 773–786 are compositionally biased toward low complexity; that stretch reads NNNNNNNNNNNNNN.

This is an uncharacterized protein from Plasmodium falciparum (isolate 3D7).